A 126-amino-acid chain; its full sequence is UPF0538 protein C2orf76 homolog (126 aa).

This sequence belongs to the UPF0538 family.

The protein is UPF0538 protein C2orf76 homolog of Mus musculus (Mouse).